A 377-amino-acid chain; its full sequence is Dehydrogenase/reductase SDR family member 13 (377 aa).

The signal sequence occupies residues 1-25; sequence MEALLLGAGLLLGAYVLVYYNLVKA. Positions 46 and 48 each coordinate NAD(+). Ser170 serves as a coordination point for substrate. The NAD(+) site is built by Tyr197, Lys201, and Ser232. Tyr197 serves as the catalytic Proton acceptor. Positions 309 to 377 are disordered; sequence RLAGLGPGED…AKVEPEIQLS (69 aa). Residues 317 to 331 show a composition bias toward acidic residues; it reads EDAEPDEDPQSEDSE. Residues 347–357 show a composition bias toward low complexity; that stretch reads SQPYPSPQSSP. Over residues 368–377 the composition is skewed to basic and acidic residues; it reads AKVEPEIQLS.

It belongs to the short-chain dehydrogenases/reductases (SDR) family.

It is found in the secreted. Putative oxidoreductase. This is Dehydrogenase/reductase SDR family member 13 from Homo sapiens (Human).